The sequence spans 212 residues: ATP phosphoribosyltransferase (212 aa).

Belongs to the ATP phosphoribosyltransferase family. Short subfamily. In terms of assembly, heteromultimer composed of HisG and HisZ subunits.

The protein resides in the cytoplasm. It catalyses the reaction 1-(5-phospho-beta-D-ribosyl)-ATP + diphosphate = 5-phospho-alpha-D-ribose 1-diphosphate + ATP. The protein operates within amino-acid biosynthesis; L-histidine biosynthesis; L-histidine from 5-phospho-alpha-D-ribose 1-diphosphate: step 1/9. In terms of biological role, catalyzes the condensation of ATP and 5-phosphoribose 1-diphosphate to form N'-(5'-phosphoribosyl)-ATP (PR-ATP). Has a crucial role in the pathway because the rate of histidine biosynthesis seems to be controlled primarily by regulation of HisG enzymatic activity. This Clostridium novyi (strain NT) protein is ATP phosphoribosyltransferase.